The primary structure comprises 677 residues: Beta-galactosidase (677 aa).

The first 23 residues, 1–23 (MPGFLVRILPLLLVLLLLGPTRG), serve as a signal peptide directing secretion. A propeptide spanning residues 24–28 (LRNAT) is cleaved from the precursor. The N-linked (GlcNAc...) asparagine glycan is linked to N26. Substrate-binding residues include Y83, E129, and N187. The active-site Proton donor is E188. C195 and C230 are oxidised to a cystine. N247 is a glycosylation site (N-linked (GlcNAc...) asparagine). The active-site Nucleophile is E268. Y333 serves as a coordination point for substrate. N-linked (GlcNAc...) asparagine glycans are attached at residues N464, N498, N542, N545, and N555. A disulfide bridge links C626 with C634. Residues 650-677 (YDHPSKPVEKRLMPPPPQKNKDSWLDHV) form a disordered region. 2 stretches are compositionally biased toward basic and acidic residues: residues 652-661 (HPSKPVEKRL) and 668-677 (KNKDSWLDHV).

Belongs to the glycosyl hydrolase 35 family. Homodimer. May form higher multimers. As to expression, detected in placenta (at protein level). Detected in fibroblasts and testis.

The protein localises to the lysosome. Its subcellular location is the cytoplasm. It localises to the perinuclear region. The catalysed reaction is Hydrolysis of terminal non-reducing beta-D-galactose residues in beta-D-galactosides.. Its function is as follows. Cleaves beta-linked terminal galactosyl residues from gangliosides, glycoproteins, and glycosaminoglycans. Functionally, has no beta-galactosidase catalytic activity, but plays functional roles in the formation of extracellular elastic fibers (elastogenesis) and in the development of connective tissue. Seems to be identical to the elastin-binding protein (EBP), a major component of the non-integrin cell surface receptor expressed on fibroblasts, smooth muscle cells, chondroblasts, leukocytes, and certain cancer cell types. In elastin producing cells, associates with tropoelastin intracellularly and functions as a recycling molecular chaperone which facilitates the secretions of tropoelastin and its assembly into elastic fibers. This is Beta-galactosidase (GLB1) from Homo sapiens (Human).